Here is a 198-residue protein sequence, read N- to C-terminus: Ribosomal RNA small subunit methyltransferase G (198 aa).

Residues Gly74, Phe79, 123 to 124 (IQ), and Arg136 contribute to the S-adenosyl-L-methionine site.

It belongs to the methyltransferase superfamily. RNA methyltransferase RsmG family.

The protein localises to the cytoplasm. The enzyme catalyses guanosine(527) in 16S rRNA + S-adenosyl-L-methionine = N(7)-methylguanosine(527) in 16S rRNA + S-adenosyl-L-homocysteine. Functionally, specifically methylates the N7 position of guanine in position 527 of 16S rRNA. This Orientia tsutsugamushi (strain Ikeda) (Rickettsia tsutsugamushi) protein is Ribosomal RNA small subunit methyltransferase G.